Consider the following 412-residue polypeptide: Imidazolonepropionase (412 aa).

Histidine 76 and histidine 78 together coordinate Fe(3+). Zn(2+)-binding residues include histidine 76 and histidine 78. Residues arginine 85, tyrosine 148, and histidine 181 each contribute to the 4-imidazolone-5-propanoate site. Tyrosine 148 is a binding site for N-formimidoyl-L-glutamate. Histidine 242 contributes to the Fe(3+) binding site. Histidine 242 contacts Zn(2+). A 4-imidazolone-5-propanoate-binding site is contributed by glutamate 245. Aspartate 317 contributes to the Fe(3+) binding site. Aspartate 317 serves as a coordination point for Zn(2+). The N-formimidoyl-L-glutamate site is built by asparagine 319 and glycine 321. Residue serine 322 participates in 4-imidazolone-5-propanoate binding.

The protein belongs to the metallo-dependent hydrolases superfamily. HutI family. The cofactor is Zn(2+). It depends on Fe(3+) as a cofactor.

The protein resides in the cytoplasm. It catalyses the reaction 4-imidazolone-5-propanoate + H2O = N-formimidoyl-L-glutamate. It participates in amino-acid degradation; L-histidine degradation into L-glutamate; N-formimidoyl-L-glutamate from L-histidine: step 3/3. Its function is as follows. Catalyzes the hydrolytic cleavage of the carbon-nitrogen bond in imidazolone-5-propanoate to yield N-formimidoyl-L-glutamate. It is the third step in the universal histidine degradation pathway. This Staphylococcus aureus (strain USA300 / TCH1516) protein is Imidazolonepropionase.